Reading from the N-terminus, the 176-residue chain is Probable non-specific lipid-transfer protein 1 (176 aa).

Residues 1 to 37 (MRTVSAPSAVALVVIVAAGLAWTSLASVAPPAPAPGS) form the signal peptide. Disulfide bonds link Cys-41–Cys-89, Cys-51–Cys-66, Cys-67–Cys-112, and Cys-87–Cys-128. The segment at 139 to 176 (QLPVSLRHGPVTGPSDPAHKARLERPQIRVPPPAPEKA) is disordered. Residues 155–165 (PAHKARLERPQ) are compositionally biased toward basic and acidic residues. Positions 167–176 (RVPPPAPEKA) are enriched in pro residues.

It belongs to the plant LTP family.

In terms of biological role, plant non-specific lipid-transfer proteins transfer phospholipids as well as galactolipids across membranes. May play a role in wax or cutin deposition in the cell walls of expanding epidermal cells and certain secretory tissues. The chain is Probable non-specific lipid-transfer protein 1 from Parietaria judaica (Pellitory-of-the-wall).